Consider the following 780-residue polypeptide: E3 UFM1-protein ligase 1 homolog (780 aa).

Over residues 403-413 the composition is skewed to polar residues; sequence STSSTNPNHST. Disordered stretches follow at residues 403–458 and 734–760; these read STSS…RSHI and SSDK…NIDL. Composition is skewed to basic and acidic residues over residues 443–458 and 736–750; these read KDRS…RSHI and DKQK…KDSD.

It belongs to the UFL1 family.

In terms of biological role, E3 UFM1-protein ligase that mediates ufmylation of target proteins. The chain is E3 UFM1-protein ligase 1 homolog from Trichoplax adhaerens (Trichoplax reptans).